A 179-amino-acid chain; its full sequence is MPGLKLVEALEYRCDRLERLIGAGYSANSDVSVQLDELYNQLHRLYFQGLKYSQDLLQLFNTFMAEDIENVGAPDDICIFASCFDDIYTLYSAFDELNSQYMEFCQISKSSLDQISFKDANIETKQLKKLPELVDNCNIMILRSIAILNRFIDWNIEVNGFFQFQKKRLLNLQKVIYST.

Its function is as follows. May be involved in protein-linked oligosaccharide phosphorylation since the deletion reduces the negative charge of the cell surface. In Saccharomyces cerevisiae (strain ATCC 204508 / S288c) (Baker's yeast), this protein is Protein LDB18 (LDB18).